Here is a 520-residue protein sequence, read N- to C-terminus: Diacylglycerol O-acyltransferase 1 (520 aa).

2 disordered regions span residues 28–57 (RRKS…GAPA) and 72–116 (QGTA…AHRR). The segment covering 34–54 (DSSNGLLLSGSDNNSPSDDVG) has biased composition (low complexity). Gly residues predominate over residues 81–98 (NNGGGDNNGGGRGGGEGR). 7 helical membrane passes run 126–146 (AIFK…LIAV), 176–196 (WPLF…FTVE), 207–227 (PVVI…PVYV), 233–253 (SAFL…LKLV), 276–296 (VSYY…TLCY), 317–337 (KLVI…NPIV), and 365–385 (VWLC…AELL). Positions 392 to 398 (FYKDWWN) match the FYXDWWN motif motif. The next 3 membrane-spanning stretches (helical) occupy residues 434-454 (LAII…IAVP), 457-477 (LFKL…FITN), and 487-507 (VGNM…CVLL). Residue H447 is part of the active site.

Belongs to the membrane-bound acyltransferase family. Sterol o-acyltransferase subfamily. As to quaternary structure, interacts with LPCAT2 and LPAT2. Ubiquitous. Highest expression in young developing seeds.

Its subcellular location is the plastid. It is found in the chloroplast membrane. It localises to the endoplasmic reticulum membrane. It catalyses the reaction an acyl-CoA + a 1,2-diacyl-sn-glycerol = a triacyl-sn-glycerol + CoA. It carries out the reaction 1,2-di-(9Z-octadecenoyl)-sn-glycerol + (9Z)-octadecenoyl-CoA = 1,2,3-tri-(9Z-octadecenoyl)-glycerol + CoA. It participates in glycerolipid metabolism; triacylglycerol biosynthesis. With respect to regulation, partially inhibited by niacin. Major contributor to triacylglycerol (TAG) synthesis and oil accumulation in seeds. Catalyzes the acylation of the sn-3 hydroxy group of sn-1,2-diacylglycerol using acyl-CoA. Can use palmitoyl-CoA and oleoyl-CoA as substrates. Can use oleoyl-CoA and linoleoyl-CoA as substrates. Has substrate preference for oleoyl-CoA compared to linoleoyl-CoA. Has complementary functions with PDAT1 that are essential for triacylglycerol synthesis and normal development of both seeds and pollen. This chain is Diacylglycerol O-acyltransferase 1, found in Arabidopsis thaliana (Mouse-ear cress).